Consider the following 31-residue polypeptide: Cuticle protein 54 (31 aa).

2 tandem repeats follow at residues 7–10 and 13–17.

Functionally, component of the cuticle of migratory locust which contains more than 100 different structural proteins. The sequence is that of Cuticle protein 54 from Locusta migratoria (Migratory locust).